Here is a 443-residue protein sequence, read N- to C-terminus: Xaa-Pro dipeptidase (443 aa).

Mn(2+) is bound by residues Asp248, Asp259, His339, Glu384, and Glu423.

The protein belongs to the peptidase M24B family. Bacterial-type prolidase subfamily. It depends on Mn(2+) as a cofactor.

The catalysed reaction is Xaa-L-Pro dipeptide + H2O = an L-alpha-amino acid + L-proline. Splits dipeptides with a prolyl residue in the C-terminal position. The chain is Xaa-Pro dipeptidase from Colwellia psychrerythraea (strain 34H / ATCC BAA-681) (Vibrio psychroerythus).